We begin with the raw amino-acid sequence, 120 residues long: NAD(P)H-quinone oxidoreductase subunit 3 (120 aa).

The next 3 helical transmembrane spans lie at 10–30, 64–84, and 89–109; these read FLGF…TNLI, MFAL…PWAV, and LGLL…IALA.

Belongs to the complex I subunit 3 family. NDH-1 can be composed of about 15 different subunits; different subcomplexes with different compositions have been identified which probably have different functions.

It is found in the cellular thylakoid membrane. It carries out the reaction a plastoquinone + NADH + (n+1) H(+)(in) = a plastoquinol + NAD(+) + n H(+)(out). The enzyme catalyses a plastoquinone + NADPH + (n+1) H(+)(in) = a plastoquinol + NADP(+) + n H(+)(out). Functionally, NDH-1 shuttles electrons from an unknown electron donor, via FMN and iron-sulfur (Fe-S) centers, to quinones in the respiratory and/or the photosynthetic chain. The immediate electron acceptor for the enzyme in this species is believed to be plastoquinone. Couples the redox reaction to proton translocation, and thus conserves the redox energy in a proton gradient. Cyanobacterial NDH-1 also plays a role in inorganic carbon-concentration. This chain is NAD(P)H-quinone oxidoreductase subunit 3, found in Prochlorococcus marinus (strain MIT 9515).